The chain runs to 509 residues: Seipin-3 (509 aa).

A disordered region spans residues Tyr-33–Val-73. Positions Asp-52–Ser-63 are enriched in low complexity. A run of 2 helical transmembrane segments spans residues Leu-238 to Ile-258 and Leu-455 to Phe-475.

It belongs to the seipin family. As to expression, expressed in seeds, seedlings, leaves, stems and roots. Not detected in flowers.

It is found in the endoplasmic reticulum membrane. Involved in lipid metabolism and lipid droplet (LD) morphology, number, and size. Supports the formation of small-sized LDs and modulates triacylglycerol accumulation. Induces probably a reorganization of the endoplasmic reticulum into LD-forming domains. The sequence is that of Seipin-3 from Arabidopsis thaliana (Mouse-ear cress).